Consider the following 128-residue polypeptide: Large ribosomal subunit protein eL22 (128 aa).

T62 carries the phosphothreonine modification. A Phosphoserine modification is found at S66. Residue K69 is modified to N6-succinyllysine.

The protein belongs to the eukaryotic ribosomal protein eL22 family. Component of the large ribosomal subunit.

The protein localises to the cytoplasm. Component of the large ribosomal subunit. The ribosome is a large ribonucleoprotein complex responsible for the synthesis of proteins in the cell. This is Large ribosomal subunit protein eL22 (RPL22) from Oryctolagus cuniculus (Rabbit).